The chain runs to 472 residues: Eukaryotic translation initiation factor 2 subunit 3 (472 aa).

An N-acetylalanine; partial modification is found at Ala2. A Phosphoserine modification is found at Ser16. Positions 39–248 (QATINIGTIG…IVKKIPVPPR (210 aa)) constitute a tr-type G domain. The segment at 48–55 (GHVAHGKS) is G1. A GTP-binding site is contributed by 51–56 (AHGKST). The segment at 76 to 80 (NITIK) is G2. Positions 134 to 137 (DCPG) are G3. GTP contacts are provided by residues 190–193 (NKID) and 225–227 (SAQ). The interval 190 to 193 (NKID) is G4. Positions 225 to 227 (SAQ) are G5. Positions 457–469 (GQIRRGVTIKPTV) are interacts with CDC123.

Belongs to the TRAFAC class translation factor GTPase superfamily. Classic translation factor GTPase family. EIF2G subfamily. Eukaryotic translation initiation factor 2 eIF2 is a heterotrimeric complex composed of an alpha (EIF2S1), a beta (EIF2S2) and a gamma (EIF2S3) chain. eIF2 is member of the 43S pre-initiation complex (43S PIC). Interacts (via C-terminus) with CDC123; the interaction is direct. In terms of tissue distribution, expressed in testis, brain, liver and muscle.

It localises to the cytoplasm. The protein resides in the cytosol. It carries out the reaction GTP + H2O = GDP + phosphate + H(+). Functionally, member of the eIF2 complex that functions in the early steps of protein synthesis by forming a ternary complex with GTP and initiator tRNA. This complex binds to a 40S ribosomal subunit, followed by mRNA binding to form the 43S pre-initiation complex (43S PIC). Junction of the 60S ribosomal subunit to form the 80S initiation complex is preceded by hydrolysis of the GTP bound to eIF2 and release of an eIF2-GDP binary complex. In order for eIF2 to recycle and catalyze another round of initiation, the GDP bound to eIF2 must exchange with GTP by way of a reaction catalyzed by eIF-2B. This Homo sapiens (Human) protein is Eukaryotic translation initiation factor 2 subunit 3 (EIF2S3).